The chain runs to 367 residues: MTASQRTLMVMAGGTGGHVFPGLAVAHRMEAAGWRVVWLGNPAGMEATLVPKHGIPMEYVRFGGLRGKGLKTKLTLPVNLLRACWQSLGALRRVRPDVVLGMGGYITFPAGVMTALSGRPLVLHEQNSIAGLTNKVLAKLAKRVLVAFPGALPHAEWTGNPIRAELAHTEPPHARYASRSGPLNVLVVGGSLGAAALNEVVPRALALLAPGERPRVVHQAGVKHIEALKANYEAAGFAAGEDVRLVPFIDDMAAAYAAADLVICRSGAMTVSEIAAVGVAALFVPFPYAVDDHQTTNAAFLAEAGAAVLVQQRDLSAELLADWLRGQSRASLADMAERSRALAKPEATDEVARVCAKAAGANLETLQ.

UDP-N-acetyl-alpha-D-glucosamine-binding positions include 15–17, asparagine 127, arginine 163, serine 191, isoleucine 249, and glutamine 294; that span reads TGG.

This sequence belongs to the glycosyltransferase 28 family. MurG subfamily.

The protein resides in the cell inner membrane. It carries out the reaction di-trans,octa-cis-undecaprenyl diphospho-N-acetyl-alpha-D-muramoyl-L-alanyl-D-glutamyl-meso-2,6-diaminopimeloyl-D-alanyl-D-alanine + UDP-N-acetyl-alpha-D-glucosamine = di-trans,octa-cis-undecaprenyl diphospho-[N-acetyl-alpha-D-glucosaminyl-(1-&gt;4)]-N-acetyl-alpha-D-muramoyl-L-alanyl-D-glutamyl-meso-2,6-diaminopimeloyl-D-alanyl-D-alanine + UDP + H(+). Its pathway is cell wall biogenesis; peptidoglycan biosynthesis. In terms of biological role, cell wall formation. Catalyzes the transfer of a GlcNAc subunit on undecaprenyl-pyrophosphoryl-MurNAc-pentapeptide (lipid intermediate I) to form undecaprenyl-pyrophosphoryl-MurNAc-(pentapeptide)GlcNAc (lipid intermediate II). This Burkholderia cenocepacia (strain HI2424) protein is UDP-N-acetylglucosamine--N-acetylmuramyl-(pentapeptide) pyrophosphoryl-undecaprenol N-acetylglucosamine transferase.